The primary structure comprises 557 residues: Phosphomethylpyrimidine synthase (557 aa).

Residues N197, M226, Y255, H291, 311–313 (SRG), 352–355 (DGLR), and E391 each bind substrate. Position 395 (H395) interacts with Zn(2+). Y418 provides a ligand contact to substrate. H459 is a binding site for Zn(2+). [4Fe-4S] cluster-binding residues include C539, C542, and C547.

This sequence belongs to the ThiC family. In terms of assembly, homodimer. [4Fe-4S] cluster is required as a cofactor.

It carries out the reaction 5-amino-1-(5-phospho-beta-D-ribosyl)imidazole + S-adenosyl-L-methionine = 4-amino-2-methyl-5-(phosphooxymethyl)pyrimidine + CO + 5'-deoxyadenosine + formate + L-methionine + 3 H(+). It participates in cofactor biosynthesis; thiamine diphosphate biosynthesis. In terms of biological role, catalyzes the synthesis of the hydroxymethylpyrimidine phosphate (HMP-P) moiety of thiamine from aminoimidazole ribotide (AIR) in a radical S-adenosyl-L-methionine (SAM)-dependent reaction. In Anaplasma phagocytophilum (strain HZ), this protein is Phosphomethylpyrimidine synthase.